Here is a 1134-residue protein sequence, read N- to C-terminus: Phospholipid-transporting ATPase IH (1134 aa).

Residues 1-61 (MDCSLVRTLV…SSKYTFWNFI (61 aa)) lie on the Cytoplasmic side of the membrane. Residues 62-82 (PKNLFEQFRRVANFYFLIIFL) traverse the membrane as a helical segment. The Extracellular portion of the chain corresponds to 83-88 (VQLIID). A helical membrane pass occupies residues 89–110 (TPTSPVTSGLPLFFVITVTAIK). Residues 111 to 296 (QGYEDWLRHK…SAVEKSMNAF (186 aa)) lie on the Cytoplasmic side of the membrane. Residues 297–318 (LIVYLCILISKALINTVLKYMW) traverse the membrane as a helical segment. Residues 319–349 (QSEPFRDEPWYNQKTESERQRNLFLKAFTDF) are Extracellular-facing. Residues 350–372 (LAFMVLFNYIIPVSMYVTVEMQK) form a helical membrane-spanning segment. Over 373-881 (FLGSYFITWD…GHFYYIRISE (509 aa)) the chain is Cytoplasmic. Aspartate 414 acts as the 4-aspartylphosphate intermediate in catalysis. Aspartate 414, lysine 415, threonine 416, glutamate 511, phenylalanine 553, lysine 576, arginine 607, threonine 687, glycine 688, and aspartate 689 together coordinate ATP. Mg(2+) is bound at residue aspartate 414. Residue threonine 416 participates in Mg(2+) binding. Serine 738 is modified (phosphoserine). 2 residues coordinate ATP: arginine 798 and lysine 804. A Mg(2+)-binding site is contributed by aspartate 825. 2 residues coordinate ATP: asparagine 828 and aspartate 829. Aspartate 829 contributes to the Mg(2+) binding site. The chain crosses the membrane as a helical span at residues 882–902 (LVQYFFYKNVCFIFPQFLYQF). Topologically, residues 903–914 (FCGFSQQTLYDT) are extracellular. A helical membrane pass occupies residues 915–934 (AYLTLYNISFTSLPILLYSL). Residues 935-964 (MEQHVGIDVLKRDPTLYRDVAKNALLRWRV) lie on the Cytoplasmic side of the membrane. A helical membrane pass occupies residues 965-986 (FIYWTLLGLFDALVFFFGAYFV). Topologically, residues 987–1000 (FENTTVTSNGQIFG) are extracellular. Residues 1001-1023 (NWTFGTLVFTVMVFTVTLKLALD) form a helical membrane-spanning segment. The Cytoplasmic segment spans residues 1024–1029 (THYWTW). The helical transmembrane segment at 1030–1050 (INHFVIWGSLLFYVVFSLLWG) threads the bilayer. Residues 1051 to 1068 (GVIWPFLNYQRMYYVFIQ) are Extracellular-facing. The chain crosses the membrane as a helical span at residues 1069–1093 (MLSSGPAWLAIVLLVTISLLPDVLK). At 1094–1134 (KVLCRQLWPTATERVQTKSQCLSVEQSTIFMLSQTSSSLSF) the chain is on the cytoplasmic side.

This sequence belongs to the cation transport ATPase (P-type) (TC 3.A.3) family. Type IV subfamily. In terms of assembly, component of a P4-ATPase flippase complex which consists of a catalytic alpha subunit ATP11A and an accessory beta subunit TMEM30A. It depends on Mg(2+) as a cofactor. Post-translationally, proteolytically cleaved by CASP3. Widely expressed. Expressed in myoblasts.

It is found in the cell membrane. The protein resides in the early endosome. It localises to the recycling endosome. The protein localises to the endoplasmic reticulum membrane. It catalyses the reaction ATP + H2O + phospholipidSide 1 = ADP + phosphate + phospholipidSide 2.. The enzyme catalyses a 1,2-diacyl-sn-glycero-3-phospho-L-serine(out) + ATP + H2O = a 1,2-diacyl-sn-glycero-3-phospho-L-serine(in) + ADP + phosphate + H(+). It carries out the reaction a 1,2-diacyl-sn-glycero-3-phosphoethanolamine(out) + ATP + H2O = a 1,2-diacyl-sn-glycero-3-phosphoethanolamine(in) + ADP + phosphate + H(+). The flippase activity is inactivated by caspase-mediated cleavage in apoptotic cells, allowing for PS exposure on the cell surface and engulfment of apoptotic cells by macrophages. The ATPase activity is up-regulated by aminophospholipids PS and PE and down-regulated by increasing intracellular Ca2+ levels. In terms of biological role, catalytic component of a P4-ATPase flippase complex which catalyzes the hydrolysis of ATP coupled to the transport of aminophospholipids, phosphatidylserines (PS) and phosphatidylethanolamines (PE), from the outer to the inner leaflet of the plasma membrane. Does not show flippase activity toward phosphatidylcholine (PC). Contributes to the maintenance of membrane lipid asymmetry with a specific role in morphogenesis of muscle cells. In myoblasts, mediates PS enrichment at the inner leaflet of plasma membrane, triggering PIEZO1-dependent Ca2+ influx and Rho GTPases signal transduction, subsequently leading to the assembly of cortical actomyosin fibers and myotube formation. May be involved in the uptake of farnesyltransferase inhibitor drugs, such as lonafarnib. The protein is Phospholipid-transporting ATPase IH (ATP11A) of Homo sapiens (Human).